The following is a 457-amino-acid chain: UDP-N-acetyl-alpha-D-muramoyl-L-alanyl-L-glutamate epimerase (457 aa).

Belongs to the MurL family.

The catalysed reaction is UDP-N-acetyl-alpha-D-muramoyl-L-alanyl-L-glutamate + ATP + H2O = UDP-N-acetyl-alpha-D-muramoyl-L-alanyl-D-glutamate + AMP + diphosphate + H(+). Its pathway is cell wall biogenesis; peptidoglycan biosynthesis. In terms of biological role, cell wall formation. Catalyzes epimerization of the terminal L-glutamate in UDP-N-acetyl-alpha-D-muramoyl-L-alanyl-L-glutamate. This is UDP-N-acetyl-alpha-D-muramoyl-L-alanyl-L-glutamate epimerase from Salinispora tropica (strain ATCC BAA-916 / DSM 44818 / JCM 13857 / NBRC 105044 / CNB-440).